Here is a 325-residue protein sequence, read N- to C-terminus: 8-oxo-dGDP phosphatase NUDT18 (325 aa).

A Nudix hydrolase domain is found at asparagine 38–leucine 163. Leucine 55 contributes to the Mg(2+) binding site. The Nudix box signature appears at glycine 73–glycine 94.

The protein belongs to the Nudix hydrolase family. It depends on Mn(2+) as a cofactor. Requires Mg(2+) as cofactor.

It catalyses the reaction 8-oxo-dGDP + H2O = 8-oxo-dGMP + phosphate + H(+). It carries out the reaction 8-oxo-dADP + H2O = 8-oxo-dAMP + phosphate + H(+). The catalysed reaction is 2-oxo-dADP + H2O = 2-oxo-dAMP + phosphate + H(+). The enzyme catalyses 8-oxo-GDP + H2O = 8-oxo-GMP + phosphate + H(+). Its function is as follows. Mediates the hydrolysis of oxidized nucleoside diphosphate derivatives. Hydrolyzes 8-oxo-7,8-dihydroguanine (8-oxo-Gua)-containing deoxyribo- and ribonucleoside diphosphates to the monophosphates. Hydrolyzes 8-oxo-dGDP and 8-oxo-GDP with the same efficiencies. Also hydrolyzes 8-OH-dADP and 2-OH-dADP. Exhibited no or minimal hydrolysis activity against 8-oxo-dGTP, 8-oxo-GTP, dGTP, GTP, dGDP and GDP. Probably removes oxidized guanine nucleotides from both the DNA and RNA precursor pools. In Danio rerio (Zebrafish), this protein is 8-oxo-dGDP phosphatase NUDT18 (nudt18).